The primary structure comprises 155 residues: SsrA-binding protein (155 aa).

The segment covering 135–147 has biased composition (basic and acidic residues); sequence TIKRRDQERDIKK. The interval 135–155 is disordered; it reads TIKRRDQERDIKKQMKHYNAR.

It belongs to the SmpB family.

The protein localises to the cytoplasm. Required for rescue of stalled ribosomes mediated by trans-translation. Binds to transfer-messenger RNA (tmRNA), required for stable association of tmRNA with ribosomes. tmRNA and SmpB together mimic tRNA shape, replacing the anticodon stem-loop with SmpB. tmRNA is encoded by the ssrA gene; the 2 termini fold to resemble tRNA(Ala) and it encodes a 'tag peptide', a short internal open reading frame. During trans-translation Ala-aminoacylated tmRNA acts like a tRNA, entering the A-site of stalled ribosomes, displacing the stalled mRNA. The ribosome then switches to translate the ORF on the tmRNA; the nascent peptide is terminated with the 'tag peptide' encoded by the tmRNA and targeted for degradation. The ribosome is freed to recommence translation, which seems to be the essential function of trans-translation. The chain is SsrA-binding protein from Streptococcus pyogenes serotype M12 (strain MGAS2096).